The following is a 130-amino-acid chain: Glycine cleavage system H protein (130 aa).

The 82-residue stretch at 25-106 (TALIGISDFA…PFDSWMIKVK (82 aa)) folds into the Lipoyl-binding domain. Lys-66 bears the N6-lipoyllysine mark.

The protein belongs to the GcvH family. The glycine cleavage system is composed of four proteins: P, T, L and H. It depends on (R)-lipoate as a cofactor.

The glycine cleavage system catalyzes the degradation of glycine. The H protein shuttles the methylamine group of glycine from the P protein to the T protein. The sequence is that of Glycine cleavage system H protein from Leptospira borgpetersenii serovar Hardjo-bovis (strain JB197).